The primary structure comprises 192 residues: Crossover junction endodeoxyribonuclease RuvC (192 aa).

Active-site residues include aspartate 8, glutamate 67, and aspartate 139. Mg(2+) contacts are provided by aspartate 8, glutamate 67, and aspartate 139.

It belongs to the RuvC family. In terms of assembly, homodimer which binds Holliday junction (HJ) DNA. The HJ becomes 2-fold symmetrical on binding to RuvC with unstacked arms; it has a different conformation from HJ DNA in complex with RuvA. In the full resolvosome a probable DNA-RuvA(4)-RuvB(12)-RuvC(2) complex forms which resolves the HJ. Mg(2+) is required as a cofactor.

The protein localises to the cytoplasm. It carries out the reaction Endonucleolytic cleavage at a junction such as a reciprocal single-stranded crossover between two homologous DNA duplexes (Holliday junction).. Its function is as follows. The RuvA-RuvB-RuvC complex processes Holliday junction (HJ) DNA during genetic recombination and DNA repair. Endonuclease that resolves HJ intermediates. Cleaves cruciform DNA by making single-stranded nicks across the HJ at symmetrical positions within the homologous arms, yielding a 5'-phosphate and a 3'-hydroxyl group; requires a central core of homology in the junction. The consensus cleavage sequence is 5'-(A/T)TT(C/G)-3'. Cleavage occurs on the 3'-side of the TT dinucleotide at the point of strand exchange. HJ branch migration catalyzed by RuvA-RuvB allows RuvC to scan DNA until it finds its consensus sequence, where it cleaves and resolves the cruciform DNA. This is Crossover junction endodeoxyribonuclease RuvC from Actinobacillus pleuropneumoniae serotype 5b (strain L20).